Reading from the N-terminus, the 217-residue chain is Thiopurine S-methyltransferase (217 aa).

S-adenosyl-L-methionine is bound by residues Trp10, Leu45, Glu66, and Arg127.

This sequence belongs to the class I-like SAM-binding methyltransferase superfamily. TPMT family.

The protein localises to the cytoplasm. The enzyme catalyses S-adenosyl-L-methionine + a thiopurine = S-adenosyl-L-homocysteine + a thiopurine S-methylether.. The polypeptide is Thiopurine S-methyltransferase (Acinetobacter baylyi (strain ATCC 33305 / BD413 / ADP1)).